Consider the following 212-residue polypeptide: MSELSDIRREYTLGELHSEDVPNDPMDLFNAWLEVVRDSQIQDPTAMSVATVDENGQPFQRIVLLKRFGDDGFVFFTNLESRKAQHIANNAQVSILFPWHSIDKQVAVTGIAEPLSKTEVLKYFMSRPKESQIAAWVSKQSSPISARKALETKFAEMKAKFSKGDVPLPKFWGGYLVRPKSIEFWQGGEHRLHDRFIYTKVGDDWVRSRLAP.

Residues 8 to 11 and K66 each bind substrate; that span reads RREY. Residues 61-66, 76-77, R82, K83, and Q105 each bind FMN; these read RIVLLK and FT. Y123, R127, and S131 together coordinate substrate. FMN is bound by residues 140–141 and W185; that span reads QS. Residue 191-193 coordinates substrate; it reads RLH. Position 195 (R195) interacts with FMN.

The protein belongs to the pyridoxamine 5'-phosphate oxidase family. As to quaternary structure, homodimer. The cofactor is FMN.

The enzyme catalyses pyridoxamine 5'-phosphate + O2 + H2O = pyridoxal 5'-phosphate + H2O2 + NH4(+). It catalyses the reaction pyridoxine 5'-phosphate + O2 = pyridoxal 5'-phosphate + H2O2. The protein operates within cofactor metabolism; pyridoxal 5'-phosphate salvage; pyridoxal 5'-phosphate from pyridoxamine 5'-phosphate: step 1/1. Its pathway is cofactor metabolism; pyridoxal 5'-phosphate salvage; pyridoxal 5'-phosphate from pyridoxine 5'-phosphate: step 1/1. Catalyzes the oxidation of either pyridoxine 5'-phosphate (PNP) or pyridoxamine 5'-phosphate (PMP) into pyridoxal 5'-phosphate (PLP). The chain is Pyridoxine/pyridoxamine 5'-phosphate oxidase from Shewanella halifaxensis (strain HAW-EB4).